Here is a 188-residue protein sequence, read N- to C-terminus: MVSVNDLKTGLTIKTSDGMIWQVLEFQHVKPGKGAAFVRTKMRNIRNGNIQEMTFRGGERVERAHIERNKMQYLYPMGETYVFMDTESYEQLELTTAQVEAALPFLLENMEVQIAIYNGEVLGIELPNTIVMTIVEAEPGVKGDTASNVKKNATVETGHIIHVPLFIEAGEKVTVDTRTGDFTGRYNG.

This sequence belongs to the elongation factor P family.

It localises to the cytoplasm. The protein operates within protein biosynthesis; polypeptide chain elongation. In terms of biological role, involved in peptide bond synthesis. Stimulates efficient translation and peptide-bond synthesis on native or reconstituted 70S ribosomes in vitro. Probably functions indirectly by altering the affinity of the ribosome for aminoacyl-tRNA, thus increasing their reactivity as acceptors for peptidyl transferase. This Exiguobacterium sibiricum (strain DSM 17290 / CCUG 55495 / CIP 109462 / JCM 13490 / 255-15) protein is Elongation factor P.